A 266-amino-acid chain; its full sequence is Undecaprenyl-diphosphatase (266 aa).

8 helical membrane-spanning segments follow: residues 1–21, 39–59, 86–106, 117–137, 153–173, 190–210, 216–236, and 246–266; these read MDFLKFIFYGIIQGLTEFIPV, PGSSLSAIIQIGSVLAIFWYF, SIFIGTIPIVLIGGIVKLFVT, FSIAVVSILMSLIMFLADIST, FIGISQAFAIIPGVSRSGATI, SFLLGIPSISLAAFVEFITSI, FPFLPLFVGLITTFFSSLLAI, and NGLKIFIYYRLVFGILIILNL.

It belongs to the UppP family.

The protein resides in the cell inner membrane. It catalyses the reaction di-trans,octa-cis-undecaprenyl diphosphate + H2O = di-trans,octa-cis-undecaprenyl phosphate + phosphate + H(+). Its function is as follows. Catalyzes the dephosphorylation of undecaprenyl diphosphate (UPP). Confers resistance to bacitracin. The protein is Undecaprenyl-diphosphatase of Prochlorococcus marinus (strain MIT 9515).